An 86-amino-acid chain; its full sequence is UPF0297 protein SH1302 (86 aa).

This sequence belongs to the UPF0297 family.

The chain is UPF0297 protein SH1302 from Staphylococcus haemolyticus (strain JCSC1435).